A 671-amino-acid chain; its full sequence is MSEFQLVTRFEPAGDQPEAIRQLVEGIDAGLAHQTLLGVTGSGKTFSIANVISQVKRPTLVLAPNKTLAAQLYGEFKAFFPNNAVEYFVSYYDYYQPEAYVPSSDTFIEKDASINDHIEQMRLSATKALLERKDAIIVTTVSCIYGLGSPETYLRMVMHIDRGDKLDQRALLRRLADLQYTRNDMDFARATFRVRGDVIDIYPAESDLEAIRVELFDDEVESLSAFDPLTGEVIRKLPRFTFYPKSHYVTPRETLIEAMEGIKVELQERLEYLRTQNKLVEAQRLEQRTRFDLEMMLELGYCNGIENYSRYLSGRPSGAPPPTLFDYLPADALLVIDESHVSVPQVGAMYKGDRSRKETLVEYGFRLPSALDNRPMRFDEWEAISPQTIFVSATPGNYEAEHAGRVVEQVVRPTGLVDPQIEIRPALTQVDDLLSEIHKRTALEERVLVTTLTKRMSEDLTDYLSDHGVRVRYLHSDIDTVERVEIIRDLRLGTFDVLVGINLLREGLDMPEVSLVAILDADKEGFLRSDRSLIQTIGRAARNLNGRAILYADRITGSMERAIGETERRRDKQLAFNHEHGITPKGVFKDVADIMEGATVPGSRSKKRKGMAKAAEENARYENELRSPSEINKRIRQLEEKMYQLARDLEFEAAAQMRDEIGKLRERLLAV.

The Helicase ATP-binding domain occupies 25-412 (EGIDAGLAHQ…AGRVVEQVVR (388 aa)). Residue 38-45 (GVTGSGKT) coordinates ATP. The short motif at 91–114 (YYDYYQPEAYVPSSDTFIEKDASI) is the Beta-hairpin element. Residues 429–595 (QVDDLLSEIH…GVFKDVADIM (167 aa)) enclose the Helicase C-terminal domain. A disordered region spans residues 600–624 (VPGSRSKKRKGMAKAAEENARYENE). Basic and acidic residues predominate over residues 614–624 (AAEENARYENE). Residues 632–667 (NKRIRQLEEKMYQLARDLEFEAAAQMRDEIGKLRER) form the UVR domain.

The protein belongs to the UvrB family. In terms of assembly, forms a heterotetramer with UvrA during the search for lesions. Interacts with UvrC in an incision complex.

The protein localises to the cytoplasm. The UvrABC repair system catalyzes the recognition and processing of DNA lesions. A damage recognition complex composed of 2 UvrA and 2 UvrB subunits scans DNA for abnormalities. Upon binding of the UvrA(2)B(2) complex to a putative damaged site, the DNA wraps around one UvrB monomer. DNA wrap is dependent on ATP binding by UvrB and probably causes local melting of the DNA helix, facilitating insertion of UvrB beta-hairpin between the DNA strands. Then UvrB probes one DNA strand for the presence of a lesion. If a lesion is found the UvrA subunits dissociate and the UvrB-DNA preincision complex is formed. This complex is subsequently bound by UvrC and the second UvrB is released. If no lesion is found, the DNA wraps around the other UvrB subunit that will check the other stand for damage. The protein is UvrABC system protein B of Pseudomonas savastanoi pv. phaseolicola (strain 1448A / Race 6) (Pseudomonas syringae pv. phaseolicola (strain 1448A / Race 6)).